The sequence spans 400 residues: UDP-glucuronate:glycolipid 2-beta-glucuronosyltransferase (400 aa).

Asp157 (proton acceptor) is an active-site residue. UDP-alpha-D-glucuronate contacts are provided by residues 230–231 (SM), 272–273 (EM), Tyr292, and 306–310 (MKLLQ). The segment at 377–400 (PETRLYPHPPTAAPQLSSEAALSH) is disordered. Residues 390–400 (PQLSSEAALSH) show a composition bias toward polar residues.

Belongs to the glycosyltransferase 70 family.

The protein resides in the cell inner membrane. It carries out the reaction alpha-D-Man-(1-&gt;3)-beta-D-Glc-(1-&gt;4)-alpha-D-Glc-1-di-trans,octa-cis-undecaprenyl diphosphate + UDP-alpha-D-glucuronate = beta-D-GlcA-(1-&gt;2)-alpha-D-Man-(1-&gt;3)-beta-D-Glc-(1-&gt;4)-alpha-D-Glc-di-trans,octa-cis-undecaprenyl diphosphate + UDP + H(+). It participates in glycan biosynthesis; xanthan biosynthesis. In terms of biological role, catalyzes the transfer of a glucuronic acid (GlcA) residue from UDP-glucuronate to mannose-alpha-1,3-glucose-beta-1,4-glucose-P-P-polyisoprenyl to form the lipid-linked tetrasaccharide GlcA-Man-Glc(2)-PP-Pol, with a glucuronic acid-beta-mannose linkage. Is involved in the biosynthesis of the exopolysaccharide xanthan, since it catalyzes the fourth glycosylation step in the assembly of the pentasaccharide-P-P-polyisoprenyl repeating unit of xanthan. Is unable to use the trisaccharide acceptor freed from the pyrophosphate lipid moiety. Does not show specificity for the lipidic portion of the acceptor. Shows diminished activity when tested with 6-O-acetyl-mannose-alpha-1,3-glucose-beta-1,4-glucose-P-P-polyisoprenyl, a putative intermediate in the synthesis of xanthan; this could indicate that acetylation of the internal mannose takes place after the formation of the GumK product. In Xanthomonas campestris pv. campestris, this protein is UDP-glucuronate:glycolipid 2-beta-glucuronosyltransferase (gumK).